The primary structure comprises 481 residues: MFS transporter eqxG (481 aa).

A compositionally biased stretch (low complexity) spans 1–13 (MATTDPAIAAPDD). A disordered region spans residues 1–58 (MATTDPAIAAPDDSQLEAGRENIRANVGDALEKPSSSTGTMVDEPTDPNVVDWDGPHD). An N-linked (GlcNAc...) asparagine glycan is attached at N64. A helical transmembrane segment spans residues 72–92 (LHLVIVSLFTLAANLAATMFA). The N-linked (GlcNAc...) asparagine glycan is linked to N106. 10 consecutive transmembrane segments (helical) span residues 111-131 (AMTV…LAPL), 146-166 (FVYV…MFLV), 169-189 (IICG…VADL), 201-221 (LFTV…TVIF), 276-296 (PIVL…FLLF), 315-335 (GLAY…FSVL), 353-373 (LILM…YGWT), 380-400 (WIVP…VVIP), 403-423 (IYLV…ANLL), and 439-459 (LYVS…CLLF).

It belongs to the major facilitator superfamily.

The protein resides in the cell membrane. Efflux pump that might be required for efficient secretion of equisetin or other secondary metabolies produced by the equisetin gene cluster. This chain is MFS transporter eqxG, found in Fusarium heterosporum.